The following is a 359-amino-acid chain: 4-hydroxy-2-oxovalerate aldolase 1 (359 aa).

The 253-residue stretch at 23–275 (VRVTDTSLRD…KTGIDFFDIA (253 aa)) folds into the Pyruvate carboxyltransferase domain. Residue 31-32 (RD) participates in substrate binding. D32 is a binding site for Mn(2+). Catalysis depends on H35, which acts as the Proton acceptor. Residues S185 and H214 each coordinate substrate. Mn(2+)-binding residues include H214 and H216. Residue Y305 coordinates substrate.

Belongs to the 4-hydroxy-2-oxovalerate aldolase family.

It catalyses the reaction (S)-4-hydroxy-2-oxopentanoate = acetaldehyde + pyruvate. The sequence is that of 4-hydroxy-2-oxovalerate aldolase 1 from Mycobacteroides abscessus (strain ATCC 19977 / DSM 44196 / CCUG 20993 / CIP 104536 / JCM 13569 / NCTC 13031 / TMC 1543 / L948) (Mycobacterium abscessus).